Reading from the N-terminus, the 703-residue chain is Methionine--tRNA ligase (703 aa).

The 'HIGH' region motif lies at 15–25; it reads PYANGPVHLGH. 4 residues coordinate Zn(2+): Cys147, Cys150, Cys160, and Cys163. Residues 345-349 carry the 'KMSKS' region motif; that stretch reads KFSKS. Lys348 serves as a coordination point for ATP. The region spanning 602 to 703 is the tRNA-binding domain; the sequence is DFQKIDLRVA…GEGINGNSVS (102 aa).

This sequence belongs to the class-I aminoacyl-tRNA synthetase family. MetG type 1 subfamily. In terms of assembly, homodimer. The cofactor is Zn(2+).

The protein resides in the cytoplasm. The enzyme catalyses tRNA(Met) + L-methionine + ATP = L-methionyl-tRNA(Met) + AMP + diphosphate. Functionally, is required not only for elongation of protein synthesis but also for the initiation of all mRNA translation through initiator tRNA(fMet) aminoacylation. This chain is Methionine--tRNA ligase, found in Chlorobaculum tepidum (strain ATCC 49652 / DSM 12025 / NBRC 103806 / TLS) (Chlorobium tepidum).